A 478-amino-acid chain; its full sequence is tRNA (guanine-N(7)-)-methyltransferase non-catalytic subunit TRM82 (478 aa).

WD repeat units lie at residues 14–53, 73–113, 217–258, and 263–301; these read SSADGAAWTLFGASGSKIVVQSSNGVASVWSRQAVQVLDP, EQKF…GLQQ, GHVS…HIIE, and GHEEFVSRLCVTRSGLLVSGGGDAHLLVWDWRNFLLNEK.

It belongs to the WD repeat TRM82 family. As to quaternary structure, forms a heterodimer with the catalytic subunit TRM8.

Its subcellular location is the nucleus. It functions in the pathway tRNA modification; N(7)-methylguanine-tRNA biosynthesis. Its function is as follows. Required for the formation of N(7)-methylguanine at position 46 (m7G46) in tRNA. In the complex, it is required to stabilize and induce conformational changes of the catalytic subunit. The polypeptide is tRNA (guanine-N(7)-)-methyltransferase non-catalytic subunit TRM82 (Phaeosphaeria nodorum (strain SN15 / ATCC MYA-4574 / FGSC 10173) (Glume blotch fungus)).